Reading from the N-terminus, the 53-residue chain is Temporin-SHd (53 aa).

An N-terminal signal peptide occupies residues 1–10 (FLGTINLSLC). A propeptide spanning residues 11 to 34 (EQERDADEEKRDEPDESDVEVEKR) is cleaved from the precursor. Phe-51 is subject to Phenylalanine amide.

Its subcellular location is the secreted. It localises to the target cell membrane. In terms of biological role, non-amphipathic mildly cationic alpha-helical antimicrobial peptide with potent activity against Gram-positive (including methicillin-resistant Staphylococcus aureus (MRSA)) and Gram-negative bacteria, and some fungi, as well as against Trypanosoma and Leishmania (both promastigote and amastigote forms). Strongly and selectively perturbs anionic bilayer membranes by interacting with the polar head groups and acyl region of the phospholipids, with formation of regions of two coexisting phases, one phase rich in peptide and the other lipid-rich. Shows low hemolytic activity (LC(50)=44 uM) and a low toxicity for human monocytes THP-1 and THP-1-derived macrophages. Is not toxic to human hepatoma-derived cells. In Pelophylax saharicus (Sahara frog), this protein is Temporin-SHd.